We begin with the raw amino-acid sequence, 279 residues long: Single-strand selective monofunctional uracil DNA glycosylase (279 aa).

Substrate contacts are provided by M86, F100, and N165. The interval 175 to 189 (SGRNLTPAELPAKQR) is DNA-binding. Residue H241 coordinates substrate.

The protein belongs to the uracil-DNA glycosylase (UDG) superfamily. SMUG1 family.

The protein localises to the nucleus. Functionally, recognizes base lesions in the genome and initiates base excision DNA repair. Acts as a monofunctional DNA glycosylase specific for uracil (U) residues in DNA with a preference for single-stranded DNA substrates. The activity is greater toward mismatches (U/G) compared to matches (U/A). Excises uracil (U), 5-formyluracil (fU) and uracil derivatives bearing an oxidized group at C5 [5-hydroxyuracil (hoU) and 5-hydroxymethyluracil (hmU)] in ssDNA and dsDNA, but not analogous cytosine derivatives (5-hydroxycytosine and 5-formylcytosine), nor other oxidized bases. The activity is damage-specific and salt-dependent. The substrate preference is the following: ssDNA &gt; dsDNA (G pair) = dsDNA (A pair) at low salt concentration, and dsDNA (G pair) &gt; dsDNA (A pair) &gt; ssDNA at high salt concentration. The polypeptide is Single-strand selective monofunctional uracil DNA glycosylase (Smug1) (Mus musculus (Mouse)).